Reading from the N-terminus, the 187-residue chain is MASTADFKNGLVLVIDGQLWQIVEFQHVKPGKGPAFVRTKLKNVLSGKVVDKTYNAGVKVETATVDRRDTTYLYRDGSDFVFMDSQDYEQHPLPESLVGDAARFLLEGMPVQVAFHNGSPLYIELPVSVEMEVTHTEPGLQGDRSSAGTKPATVETGAEIQVPLFINTGDKLKVDTRDGSYLGRVNA.

It belongs to the elongation factor P family.

It is found in the cytoplasm. It functions in the pathway protein biosynthesis; polypeptide chain elongation. Involved in peptide bond synthesis. Stimulates efficient translation and peptide-bond synthesis on native or reconstituted 70S ribosomes in vitro. Probably functions indirectly by altering the affinity of the ribosome for aminoacyl-tRNA, thus increasing their reactivity as acceptors for peptidyl transferase. The protein is Elongation factor P of Mycobacterium avium (strain 104).